The sequence spans 378 residues: CST complex subunit STN1 (378 aa).

The tract at residues 8–195 (MECESSPREE…KVYDQPFRNP (188 aa)) is interaction with CTC1. Residues 64–165 (VDIMGAVISV…EICANIYYKV (102 aa)) constitute a DNA-binding region (OB). 2 winged helix-turn-helix (wHTH) regions span residues 201–305 (EALN…YVTT) and 306–378 (KDKD…YAAF).

It belongs to the STN1 family. In terms of assembly, component of the CST complex, composed of TEN1/C17orf106, CTC1/C17orf68 and STN1; in the complex interacts directly with TEN1 and CTC1. Interacts with ACD/TPP1. Interacts with POT1 and POLA1.

Its subcellular location is the nucleus. The protein resides in the chromosome. It is found in the telomere. Its function is as follows. Component of the CST complex proposed to act as a specialized replication factor promoting DNA replication under conditions of replication stress or natural replication barriers such as the telomere duplex. The CST complex binds single-stranded DNA with high affinity in a sequence-independent manner, while isolated subunits bind DNA with low affinity by themselves. Initially the CST complex has been proposed to protect telomeres from DNA degradation. However, the CST complex has been shown to be involved in several aspects of telomere replication. The CST complex inhibits telomerase and is involved in telomere length homeostasis; it is proposed to bind to newly telomerase-synthesized 3' overhangs and to terminate telomerase action implicating the association with the ACD:POT1 complex thus interfering with its telomerase stimulation activity. The CST complex is also proposed to be involved in fill-in synthesis of the telomeric C-strand probably implicating recruitment and activation of DNA polymerase alpha. The CST complex facilitates recovery from many forms of exogenous DNA damage; seems to be involved in the re-initiation of DNA replication at repaired forks and/or dormant origins. Required for efficicient replication of the duplex region of the telomere. Promotes efficient replication of lagging-strand telomeres. Promotes general replication start following replication-fork stalling implicating new origin firing. May be in involved in C-strand fill-in during late S/G2 phase independent of its role in telomere duplex replication. The chain is CST complex subunit STN1 from Mus musculus (Mouse).